Reading from the N-terminus, the 387-residue chain is Succinate--CoA ligase [ADP-forming] subunit beta (387 aa).

The 236-residue stretch at 9–244 (KQLFASYGLP…VSQEDDRENR (236 aa)) folds into the ATP-grasp domain. ATP-binding positions include Lys-46, 53–55 (GRG), Glu-99, Cys-102, and Glu-107. Residues Asn-199 and Asp-213 each contribute to the Mg(2+) site. Residues Asn-264 and 321 to 323 (GIV) contribute to the substrate site.

This sequence belongs to the succinate/malate CoA ligase beta subunit family. Heterotetramer of two alpha and two beta subunits. The cofactor is Mg(2+).

The enzyme catalyses succinate + ATP + CoA = succinyl-CoA + ADP + phosphate. The catalysed reaction is GTP + succinate + CoA = succinyl-CoA + GDP + phosphate. The protein operates within carbohydrate metabolism; tricarboxylic acid cycle; succinate from succinyl-CoA (ligase route): step 1/1. Succinyl-CoA synthetase functions in the citric acid cycle (TCA), coupling the hydrolysis of succinyl-CoA to the synthesis of either ATP or GTP and thus represents the only step of substrate-level phosphorylation in the TCA. The beta subunit provides nucleotide specificity of the enzyme and binds the substrate succinate, while the binding sites for coenzyme A and phosphate are found in the alpha subunit. This chain is Succinate--CoA ligase [ADP-forming] subunit beta, found in Legionella pneumophila (strain Corby).